The primary structure comprises 206 residues: GTP-binding protein YPT1 (206 aa).

The residue at position 1 (methionine 1) is an N-acetylmethionine. GTP contacts are provided by residues 17–23, 33–40, glycine 66, and 121–124; these read SGVGKSC, YTNDYIST, and NKCD. Cysteine 23 carries the S-palmitoyl cysteine lipid modification. Residues 37–45 carry the Effector region motif; the sequence is YISTIGVDF. The segment at 63–80 is interaction with GDI1; that stretch reads DTAGQERFRTITSSYYRG. The S-palmitoyl cysteine moiety is linked to residue cysteine 123. Residue lysine 144 forms a Glycyl lysine isopeptide (Lys-Gly) (interchain with G-Cter in ubiquitin) linkage. Position 152 to 153 (152 to 153) interacts with GTP; sequence AL. A phosphoserine mark is found at serine 172 and serine 174. A disordered region spans residues 173–206; that stretch reads MSQQNLNETTQKKEDKGNVNLKGQSLTNTGGGCC. Positions 189–195 are interaction with GDI1; sequence GNVNLKG. S-geranylgeranyl cysteine attachment occurs at residues cysteine 205 and cysteine 206.

Belongs to the small GTPase superfamily. Rab family. In terms of assembly, forms a complex with the Rab escort protein (REP) MRS6, which is recognized by Rab geranylgeranyltransferase BET2-BET4. Interacts with the Rab GDP dissociation inhibitor GDI1, which can retrieve from and deliver to membranes the GDP-bound and prenylated form of YPT1. Interacts with YIP1, which is required for proper membrane targeting of prenylated YPT1. Interacts with YIF1, YIP3, YIP4 and YIP5. Prenylation is required for interaction with GDI1 and YIP1.

The protein resides in the endoplasmic reticulum membrane. It localises to the golgi apparatus membrane. Its subcellular location is the cytoplasm. It is found in the preautophagosomal structure membrane. With respect to regulation, rab activation is generally mediated by a guanine exchange factor (GEF), while inactivation through hydrolysis of bound GTP is catalyzed by a GTPase activating protein (GAP). YPT1 is activated by the GEFs DSS4 and TRAPP complex, and inactivated by GAPs GYP1, GYP5 and GYP8. Functionally, the small GTPases Rab are key regulators of intracellular membrane trafficking, from the formation of transport vesicles to their fusion with membranes. Rabs cycle between an inactive GDP-bound form and an active GTP-bound form that is able to recruit to membranes different set of downstream effectors directly responsible for vesicle formation, movement, tethering and fusion. YPT1 regulates the trafficking of secretory vesicles from the endoplasmic reticulum (ER) to the Golgi. Vesicular transport depends on shuttling of YPT1 between membrane and cytosol by GDI1, probably by recycling it to its membrane of origin after a vesicle fusion event. Plays a role in the initial events of the autophagic vacuole development which take place at specialized regions of the endoplasmic reticulum. Also involved in the recycling of membrane proteins. This is GTP-binding protein YPT1 (YPT1) from Saccharomyces cerevisiae (strain ATCC 204508 / S288c) (Baker's yeast).